Consider the following 366-residue polypeptide: Endophilin-A (366 aa).

Residues 18–248 (TEKMGGAEGT…LQEKRSEAES (231 aa)) form the BAR domain. The stretch at 227–247 (QCADVLRGLQETLQEKRSEAE) forms a coiled coil. A disordered region spans residues 266–295 (GGGGGLNEDGTPSHISSSASPLPSPMRSPA). Low complexity predominate over residues 277–294 (PSHISSSASPLPSPMRSP). The 60-residue stretch at 305 to 364 (QQQPCCQALYDFDPENPGELGFKENDIITLLNRVDDNWYEGSVNGRTGYFPQSYVQVQVP) folds into the SH3 domain.

It belongs to the endophilin family.

It localises to the cytoplasm. Its subcellular location is the membrane. In terms of biological role, required presynaptically at the neuromuscular junction. Implicated in synaptic vesicle endocytosis. This is Endophilin-A from Drosophila willistoni (Fruit fly).